The chain runs to 113 residues: uncharacterized protein (113 aa).

This is an uncharacterized protein from Schizosaccharomyces pombe (strain 972 / ATCC 24843) (Fission yeast).